Consider the following 402-residue polypeptide: Arabinosyltransferase RRA1 (402 aa).

At 1–13 (MAVRKEKVQPFRE) the chain is on the cytoplasmic side. Residues 14–34 (CGIAIAVLVGIFIGCVCTILI) form a helical; Signal-anchor for type II membrane protein membrane-spanning segment. Residues 35–402 (PNDFVNFRSS…DALDRFRDGS (368 aa)) lie on the Lumenal side of the membrane. Positions 225 to 227 (DVD) match the DXD motif motif. Asparagine 253 is a glycosylation site (N-linked (GlcNAc...) asparagine).

Belongs to the glycosyltransferase 77 family. Expressed in leaf meristem and at points of cauline leaf attachments on the primary stem. Expressed at low levels in siliques.

The protein resides in the golgi apparatus membrane. Functionally, plays a role in the arabinosylation of cell wall components. Involved in the arabinosylation of extensin proteins in root hair cells. Extensins are structural glycoproteins present in cell walls and its arabinosylation is important for root hair cell development. This Arabidopsis thaliana (Mouse-ear cress) protein is Arabinosyltransferase RRA1.